The following is a 381-amino-acid chain: Succinyl-diaminopimelate desuccinylase (381 aa).

Histidine 68 serves as a coordination point for Zn(2+). Aspartate 70 is a catalytic residue. Aspartate 101 is a binding site for Zn(2+). Catalysis depends on glutamate 135, which acts as the Proton acceptor. Zn(2+)-binding residues include glutamate 136, glutamate 164, and histidine 350.

It belongs to the peptidase M20A family. DapE subfamily. In terms of assembly, homodimer. Zn(2+) serves as cofactor. It depends on Co(2+) as a cofactor.

The catalysed reaction is N-succinyl-(2S,6S)-2,6-diaminopimelate + H2O = (2S,6S)-2,6-diaminopimelate + succinate. It functions in the pathway amino-acid biosynthesis; L-lysine biosynthesis via DAP pathway; LL-2,6-diaminopimelate from (S)-tetrahydrodipicolinate (succinylase route): step 3/3. In terms of biological role, catalyzes the hydrolysis of N-succinyl-L,L-diaminopimelic acid (SDAP), forming succinate and LL-2,6-diaminopimelate (DAP), an intermediate involved in the bacterial biosynthesis of lysine and meso-diaminopimelic acid, an essential component of bacterial cell walls. The chain is Succinyl-diaminopimelate desuccinylase from Neisseria meningitidis serogroup C / serotype 2a (strain ATCC 700532 / DSM 15464 / FAM18).